A 208-amino-acid polypeptide reads, in one-letter code: Glutathione S-transferase P (208 aa).

In terms of domain architecture, GST N-terminal spans Met-1–Gly-78. Glutathione contacts are provided by residues Tyr-7, Trp-38, Lys-42, Gln-49 to Val-50, and Gln-62 to Ser-63. The GST C-terminal domain maps to Asn-80–Val-202.

It belongs to the GST superfamily. Pi family. Homodimer. As to expression, expressed in dopaminergic (DA) neuron (at protein levels).

The catalysed reaction is RX + glutathione = an S-substituted glutathione + a halide anion + H(+). Conjugation of reduced glutathione to a wide number of exogenous and endogenous hydrophobic electrophiles. Prevents dopaminergic CEP neuron degeneration in response to Mn(2+). The polypeptide is Glutathione S-transferase P (gst-1) (Caenorhabditis elegans).